We begin with the raw amino-acid sequence, 458 residues long: ATP synthase subunit beta (458 aa).

148 to 155 contacts ATP; it reads GGAGVGKT.

This sequence belongs to the ATPase alpha/beta chains family. As to quaternary structure, F-type ATPases have 2 components, CF(1) - the catalytic core - and CF(0) - the membrane proton channel. CF(1) has five subunits: alpha(3), beta(3), gamma(1), delta(1), epsilon(1). CF(0) has three main subunits: a(1), b(2) and c(9-12). The alpha and beta chains form an alternating ring which encloses part of the gamma chain. CF(1) is attached to CF(0) by a central stalk formed by the gamma and epsilon chains, while a peripheral stalk is formed by the delta and b chains.

The protein localises to the cell inner membrane. It carries out the reaction ATP + H2O + 4 H(+)(in) = ADP + phosphate + 5 H(+)(out). Functionally, produces ATP from ADP in the presence of a proton gradient across the membrane. The catalytic sites are hosted primarily by the beta subunits. This chain is ATP synthase subunit beta, found in Francisella philomiragia subsp. philomiragia (strain ATCC 25017 / CCUG 19701 / FSC 153 / O#319-036).